Consider the following 86-residue polypeptide: MKTLLLTLVVVTIVCLDLGYTLTCLNCPEMFCGKFQICRNGEKICFKKLHQRRPLSWRYIRGCADTCPVGKPYEMIECCSTDKCNR.

A signal peptide spans 1 to 21; sequence MKTLLLTLVVVTIVCLDLGYT. 5 cysteine pairs are disulfide-bonded: C24-C45, C27-C32, C38-C63, C67-C78, and C79-C84.

It belongs to the three-finger toxin family. Ancestral subfamily. Orphan group II sub-subfamily. In terms of assembly, monomer in solution. Post-translationally, the disulfide bond Cys-27-Cys-32 is probably not needed for efficient interaction of the toxin with the target receptor (Torpedo muscle or alpha-7/CHRNA7 nAChR). As to expression, expressed by the venom gland.

Its subcellular location is the secreted. In terms of biological role, neurotoxin that irreversibly inhibits nicotinic acetylcholine receptors (nAChR) and allosterically interacts with muscarinic acetylcholine receptors (mAChR). The loop II is involved in the interaction of this toxin with nAChR and mAChR. On nAChR, it acts as a competitive antagonist (muscle-type and alpha-7/CHRNA7) with IC(50) values in the micromolar range. On mAChR, in presence of ACh, it partially inhibits the effect of acetylcholine (ACh) (allosteric antagonist), whereas in the absence of ACh, it activates the receptor (allosteric agonist). It also shows a very weak inhibition of GABA(A) receptor composed of alpha-1-beta-3-gamma-2 (GABRA1 and GABRB3 and GABRG2) subunits (10 uM inhibit 31% current). In vivo, is nonlethal to mice at concentrations up to 20 mg/kg, but exerts a myorelaxant effect, induces a dose-dependent decrease in blood pressure and an increase in heart rate in mice and rats. The protein is Tryptophan-containing weak neurotoxin of Naja kaouthia (Monocled cobra).